The chain runs to 349 residues: Phosphoribosylformylglycinamidine cyclo-ligase (349 aa).

It belongs to the AIR synthase family.

The protein localises to the cytoplasm. The enzyme catalyses 2-formamido-N(1)-(5-O-phospho-beta-D-ribosyl)acetamidine + ATP = 5-amino-1-(5-phospho-beta-D-ribosyl)imidazole + ADP + phosphate + H(+). It participates in purine metabolism; IMP biosynthesis via de novo pathway; 5-amino-1-(5-phospho-D-ribosyl)imidazole from N(2)-formyl-N(1)-(5-phospho-D-ribosyl)glycinamide: step 2/2. This Listeria monocytogenes serovar 1/2a (strain ATCC BAA-679 / EGD-e) protein is Phosphoribosylformylglycinamidine cyclo-ligase.